The chain runs to 101 residues: Small ribosomal subunit protein uS14 (101 aa).

Belongs to the universal ribosomal protein uS14 family. As to quaternary structure, part of the 30S ribosomal subunit. Contacts proteins S3 and S10.

Binds 16S rRNA, required for the assembly of 30S particles and may also be responsible for determining the conformation of the 16S rRNA at the A site. The sequence is that of Small ribosomal subunit protein uS14 from Chlamydia muridarum (strain MoPn / Nigg).